A 565-amino-acid polypeptide reads, in one-letter code: Adenine deaminase (565 aa).

It belongs to the metallo-dependent hydrolases superfamily. Adenine deaminase family. Mn(2+) serves as cofactor.

It catalyses the reaction adenine + H2O + H(+) = hypoxanthine + NH4(+). The sequence is that of Adenine deaminase from Cereibacter sphaeroides (strain KD131 / KCTC 12085) (Rhodobacter sphaeroides).